Reading from the N-terminus, the 528-residue chain is Cytochrome P450 monooxygenase ppsD (528 aa).

A helical membrane pass occupies residues 2–21 (LVLVSLVLCLTGFCLLQWAL). N-linked (GlcNAc...) asparagine glycosylation occurs at Asn137. Cys441 is a binding site for heme. Residues Asn450 and Asn463 are each glycosylated (N-linked (GlcNAc...) asparagine).

The protein belongs to the cytochrome P450 family. The cofactor is heme.

Its subcellular location is the membrane. In terms of biological role, cytochrome P450 monooxygenase; part of the gene cluster that mediates the biosynthesis of 2,4'-dihydroxy-3'-methoxypropiophenone. The first step of the pathway is the conversion of acetate into acetyl-CoA by the acyl-CoA ligase ppsA. Acetyl-CoA is then used as a starter unit by the polyketide synthase ppsB and condensed with 4 malonyl-CoA unit to produce the pentaketide backbone. During polyketide extension, the polykedite chain is probably reduced and dehydrated by the KR and PT domains, respectively. O-methylation seems to be catalyzed by an unknown methyltransferase rather than by the CMeT domain of ppsB. Two hydroxylations and one further decarboxylation step catalyzed by yet unknown enzymes are then required to yield 4'-hydroxy-3'-methoxypropiophenone. PpsC functions as a carrier protein to transport 4'-hydroxy-3'-methoxypropiophenone to a specific cell compartment in which 4'-hydroxy-3'-methoxypropiophenone is hydroxylated to 2,4'-dihydroxy-3'-methoxypropiophenone by a still to be identified enzyme. In Aspergillus oryzae (strain ATCC 42149 / RIB 40) (Yellow koji mold), this protein is Cytochrome P450 monooxygenase ppsD.